Consider the following 601-residue polypeptide: Elongation factor 4 (601 aa).

The 183-residue stretch at 6–188 (SHIRNFSIIA…QIVHRVPAPE (183 aa)) folds into the tr-type G domain. Residues 18 to 23 (DHGKST) and 135 to 138 (NKID) each bind GTP.

Belongs to the TRAFAC class translation factor GTPase superfamily. Classic translation factor GTPase family. LepA subfamily.

Its subcellular location is the cell inner membrane. The catalysed reaction is GTP + H2O = GDP + phosphate + H(+). In terms of biological role, required for accurate and efficient protein synthesis under certain stress conditions. May act as a fidelity factor of the translation reaction, by catalyzing a one-codon backward translocation of tRNAs on improperly translocated ribosomes. Back-translocation proceeds from a post-translocation (POST) complex to a pre-translocation (PRE) complex, thus giving elongation factor G a second chance to translocate the tRNAs correctly. Binds to ribosomes in a GTP-dependent manner. The sequence is that of Elongation factor 4 from Anaeromyxobacter dehalogenans (strain 2CP-1 / ATCC BAA-258).